Consider the following 376-residue polypeptide: Multicilin (376 aa).

Residues 165 to 213 (EQYWRDVADHNQKALGDALVENNQLQVSLTEKQEEIASLKEKNIQLNEL) are a coiled coil. Residues 230 to 261 (ERPKHSSGATQGRLPVKRSLEDFYPQSNEPDS) form a disordered region. The segment at 331 to 376 (TELEEDVSFRTSIKEHSTIRTLAFPQGNAFTIRTAAGGYKFRWVPN) is TIRT domain.

This sequence belongs to the geminin family. In terms of assembly, component of the EDM complex, at least composed of e2f4, e2f5, mcidas and tfdp1.

The protein resides in the nucleus. In terms of biological role, transcription regulator specifically required for multiciliate cell differentiation. Acts in a multiprotein complex containing e2f4 and e2f5 that binds and activate genes required for centriole biogenesis. Activates genes required for centriole assembly (plk4, cep152) and genes specifically required for motile cilia formation (foxj1). Also promotes the deuterosome pathway of centriole biogenesis by activating expression of deup1, but not its paralog cep63. This Xenopus tropicalis (Western clawed frog) protein is Multicilin (mcidas).